The primary structure comprises 200 residues: 3-isopropylmalate dehydratase small subunit (200 aa).

It belongs to the LeuD family. LeuD type 1 subfamily. In terms of assembly, heterodimer of LeuC and LeuD.

It carries out the reaction (2R,3S)-3-isopropylmalate = (2S)-2-isopropylmalate. The protein operates within amino-acid biosynthesis; L-leucine biosynthesis; L-leucine from 3-methyl-2-oxobutanoate: step 2/4. In terms of biological role, catalyzes the isomerization between 2-isopropylmalate and 3-isopropylmalate, via the formation of 2-isopropylmaleate. This chain is 3-isopropylmalate dehydratase small subunit, found in Photobacterium profundum (strain SS9).